The chain runs to 346 residues: Transcription factor 19 (346 aa).

The FHA domain occupies 31 to 88 (YRLGCRADLCDVALRPQQEPGFISEVHAELHAERRGDDWRVSLEDHSSQGTLVNNVRL). At Ser78 the chain carries Phosphoserine. 2 disordered regions span residues 136-168 (PRSR…TLSP) and 190-289 (LTFS…AAGG). Residues 138 to 147 (SRGEEGETRA) show a composition bias toward basic and acidic residues. Polar residues predominate over residues 190–208 (LTFSRSGSGPQNPPVSTTP). Residues 250–260 (EPRKKLLRVEK) show a composition bias toward basic and acidic residues. The PHD-type zinc-finger motif lies at 294–343 (AAPCCCLPQEETVAWVQCDGCDTWFHVACVGCSIQAAKEADFRCPGCRVG). Zn(2+)-binding residues include Cys297, Cys299, Cys311, Cys314, His319, Cys322, Cys337, and Cys340.

Its subcellular location is the nucleus. Its function is as follows. Potential transcription factor that may play a role in the regulation of genes involved in cell cycle G1/S transition. May bind to regulatory elements of genes, including the promoter of the transcription factor FOXO1. This chain is Transcription factor 19 (TCF19), found in Sus scrofa (Pig).